A 411-amino-acid polypeptide reads, in one-letter code: Acetylornithine aminotransferase (411 aa).

Pyridoxal 5'-phosphate is bound by residues 107-108 and Phe-141; that span reads GT. Position 144 (Arg-144) interacts with N(2)-acetyl-L-ornithine. Residue 227 to 230 participates in pyridoxal 5'-phosphate binding; the sequence is DEIQ. Lys-256 carries the N6-(pyridoxal phosphate)lysine modification. Residue Thr-284 coordinates N(2)-acetyl-L-ornithine. A pyridoxal 5'-phosphate-binding site is contributed by Thr-285.

Belongs to the class-III pyridoxal-phosphate-dependent aminotransferase family. ArgD subfamily. In terms of assembly, homodimer. Pyridoxal 5'-phosphate serves as cofactor.

It is found in the cytoplasm. It carries out the reaction N(2)-acetyl-L-ornithine + 2-oxoglutarate = N-acetyl-L-glutamate 5-semialdehyde + L-glutamate. The protein operates within amino-acid biosynthesis; L-arginine biosynthesis; N(2)-acetyl-L-ornithine from L-glutamate: step 4/4. This chain is Acetylornithine aminotransferase, found in Xylella fastidiosa (strain Temecula1 / ATCC 700964).